A 69-amino-acid chain; its full sequence is Conotoxin reg3.6 (69 aa).

The first 20 residues, 1-20 (MMSKLGVLLTICLLLFPLSA), serve as a signal peptide directing secretion. A propeptide spanning residues 21–52 (LPLDGDQPADQPAERVQDISPDQNPLFHLVKR) is cleaved from the precursor. 3 cysteine pairs are disulfide-bonded: C54/C68, C55/C66, and C60/C69.

This sequence belongs to the conotoxin M superfamily. Expressed by the venom duct.

It is found in the secreted. The polypeptide is Conotoxin reg3.6 (Conus regius (Crown cone)).